The primary structure comprises 508 residues: Catalase (508 aa).

The N-terminal stretch at 1-21 (MHMSKSFLLISMGLASISVHA) is a signal peptide. Active-site residues include His-72 and Asn-145. Tyr-353 provides a ligand contact to heme. Residues 373 to 392 (PKSPVANHNQDGPSNNSTGL) are compositionally biased toward polar residues. The interval 373 to 396 (PKSPVANHNQDGPSNNSTGLGNVD) is disordered.

This sequence belongs to the catalase family. The cofactor is heme.

It is found in the periplasm. It catalyses the reaction 2 H2O2 = O2 + 2 H2O. Decomposes hydrogen peroxide into water and oxygen; serves to protect cells from the toxic effects of hydrogen peroxide. The sequence is that of Catalase from Vibrio vulnificus (strain YJ016).